A 328-amino-acid chain; its full sequence is Malate dehydrogenase (328 aa).

11–17 (GAAGQIG) contacts NAD(+). Arg94 and Arg100 together coordinate substrate. NAD(+)-binding positions include Asn107, Gln114, and 131 to 133 (VGN). Substrate-binding residues include Asn133 and Arg164. The Proton acceptor role is filled by His189.

This sequence belongs to the LDH/MDH superfamily. MDH type 2 family.

The enzyme catalyses (S)-malate + NAD(+) = oxaloacetate + NADH + H(+). Functionally, catalyzes the reversible oxidation of malate to oxaloacetate. The protein is Malate dehydrogenase of Acinetobacter baumannii (strain SDF).